The primary structure comprises 432 residues: Enolase (432 aa).

Gln-167 is a binding site for (2R)-2-phosphoglycerate. The Proton donor role is filled by Glu-209. 3 residues coordinate Mg(2+): Asp-246, Glu-289, and Asp-316. Residues Lys-341, Arg-370, Ser-371, and Lys-392 each contribute to the (2R)-2-phosphoglycerate site. The active-site Proton acceptor is Lys-341.

Belongs to the enolase family. The cofactor is Mg(2+).

It is found in the cytoplasm. The protein localises to the secreted. Its subcellular location is the cell surface. The enzyme catalyses (2R)-2-phosphoglycerate = phosphoenolpyruvate + H2O. It functions in the pathway carbohydrate degradation; glycolysis; pyruvate from D-glyceraldehyde 3-phosphate: step 4/5. Its function is as follows. Catalyzes the reversible conversion of 2-phosphoglycerate (2-PG) into phosphoenolpyruvate (PEP). It is essential for the degradation of carbohydrates via glycolysis. This chain is Enolase, found in Petrotoga mobilis (strain DSM 10674 / SJ95).